An 881-amino-acid polypeptide reads, in one-letter code: Putative cation exchanger C521.04c (881 aa).

Polar residues predominate over residues methionine 1 to glutamine 19. 2 disordered regions span residues methionine 1–leucine 39 and alanine 52–glutamate 142. Over residues asparagine 63–threonine 77 the composition is skewed to basic and acidic residues. Polar residues predominate over residues arginine 83–arginine 95. Over residues arginine 99–arginine 113 the composition is skewed to low complexity. Serine 129 is subject to Phosphoserine. Transmembrane regions (helical) follow at residues isoleucine 200–phenylalanine 220, leucine 329–valine 349, isoleucine 407–phenylalanine 427, valine 438–alanine 458, glycine 471–leucine 491, isoleucine 504–isoleucine 524, glycine 537–phenylalanine 557, and leucine 594–phenylalanine 614. The disordered stretch occupies residues valine 641–proline 717. Over residues asparagine 646–serine 657 the composition is skewed to polar residues. Over residues serine 678–asparagine 688 the composition is skewed to low complexity. The next 5 membrane-spanning stretches (helical) occupy residues isoleucine 726–valine 746, leucine 762–leucine 782, serine 794–phenylalanine 814, leucine 828–leucine 848, and tyrosine 859–phenylalanine 879.

The protein belongs to the Ca(2+):cation antiporter (CaCA) (TC 2.A.19) family.

The protein resides in the endoplasmic reticulum membrane. Functionally, putative cation exchanger. This Schizosaccharomyces pombe (strain 972 / ATCC 24843) (Fission yeast) protein is Putative cation exchanger C521.04c.